A 222-amino-acid chain; its full sequence is Protein Thf1 (222 aa).

Residues 169-208 are a coiled coil; that stretch reads IEKVKRDLELYRSNLDKINQARSLMKELVEQERKRRAQQT. Residues 197–222 are disordered; it reads VEQERKRRAQQTSAPPAVDASSDAPA. Residues 209 to 222 are compositionally biased toward low complexity; the sequence is SAPPAVDASSDAPA.

This sequence belongs to the THF1 family.

May be involved in photosynthetic membrane biogenesis. This is Protein Thf1 from Thermosynechococcus vestitus (strain NIES-2133 / IAM M-273 / BP-1).